The sequence spans 103 residues: Co-chaperonin GroES (103 aa).

Belongs to the GroES chaperonin family. As to quaternary structure, heptamer of 7 subunits arranged in a ring. Interacts with the chaperonin GroEL.

The protein resides in the cytoplasm. Its function is as follows. Together with the chaperonin GroEL, plays an essential role in assisting protein folding. The GroEL-GroES system forms a nano-cage that allows encapsulation of the non-native substrate proteins and provides a physical environment optimized to promote and accelerate protein folding. GroES binds to the apical surface of the GroEL ring, thereby capping the opening of the GroEL channel. The polypeptide is Co-chaperonin GroES (Prochlorococcus marinus (strain MIT 9515)).